Consider the following 584-residue polypeptide: uncharacterized protein (584 aa).

A helical membrane pass occupies residues 15-35; that stretch reads FIFFVLVFFICIIFGCIYESL. Composition is skewed to polar residues over residues 184 to 194 and 204 to 225; these read DVSTENSYTHN and GKRT…SYNI. The interval 184-226 is disordered; it reads DVSTENSYTHNNSRDDEPQNGKRTYNNQSNNNLPYDNSSYNIS. Coiled coils occupy residues 267-319 and 436-477; these read DNYP…DNYP and RDNH…HYKR.

The protein resides in the membrane. This is an uncharacterized protein from Plasmodium falciparum (isolate 3D7).